Consider the following 199-residue polypeptide: Recombination protein RecR (199 aa).

The segment at 58 to 73 adopts a C4-type zinc-finger fold; sequence CKKCFNLTSEDECEIC. The 95-residue stretch at 81 to 175 folds into the Toprim domain; it reads KLICVVSETK…KVTRIAYGLP (95 aa).

It belongs to the RecR family.

Its function is as follows. May play a role in DNA repair. It seems to be involved in an RecBC-independent recombinational process of DNA repair. It may act with RecF and RecO. The polypeptide is Recombination protein RecR (Prochlorococcus marinus (strain AS9601)).